The following is a 476-amino-acid chain: Cysteine--tRNA ligase (476 aa).

Cys30 contacts Zn(2+). Positions 32–42 (PTVYNYIHIGN) match the 'HIGH' region motif. Cys215, His240, and Glu244 together coordinate Zn(2+). The 'KMSKS' region signature appears at 274 to 278 (KMSKS). Lys277 is an ATP binding site.

The protein belongs to the class-I aminoacyl-tRNA synthetase family. In terms of assembly, monomer. Requires Zn(2+) as cofactor.

The protein resides in the cytoplasm. The enzyme catalyses tRNA(Cys) + L-cysteine + ATP = L-cysteinyl-tRNA(Cys) + AMP + diphosphate. This is Cysteine--tRNA ligase from Lactobacillus helveticus (strain DPC 4571).